We begin with the raw amino-acid sequence, 172 residues long: Bone marrow stromal antigen 2 (172 aa).

Residues 1–26 are Cytoplasmic-facing; it reads MAPSFYHYLPVAMDERWEPKGWSIRR. Lys-20 participates in a covalent cross-link: Glycyl lysine isopeptide (Lys-Gly) (interchain with G-Cter in ubiquitin). Residues 27–47 traverse the membrane as a helical; Signal-anchor for type II membrane protein segment; the sequence is WWLVAAILVVLIGVVLVCLIV. At 48 to 152 the chain is on the extracellular side; it reads YFANAAHSEA…EISTTVQVNS (105 aa). Residues Asn-70 and Asn-97 are each glycosylated (N-linked (GlcNAc...) asparagine). Residues 103 to 149 are a coiled coil; that stretch reads LRDSLKKKVSQTQEQQARIKELENKIERLNQELENLRTQKEISTTVQ. A lipid anchor (GPI-anchor amidated serine) is attached at Ser-152. A propeptide spans 153 to 172 (removed in mature form); it reads GGSVVVSSLLVLVAVLFLHF.

As to quaternary structure, parallel homodimer; disulfide-linked. May form homotetramers under reducing conditions. Isoform 1 and isoform 2 form homodimers and also heterodimers with each other. Dimerization is essential for its antiviral activity. Interacts (via cytoplasmic domain) with ARHGAP44. Interacts with MMP14 (via C-terminal cytoplasmic tail). Interacts with LILRA4/ILT7. Interacts with RNF115. N-glycosylated. In terms of processing, the GPI anchor is essential for its antiviral activity. In terms of tissue distribution, ubiquitously expressed, with highest levels in brain and liver. Present in liver (at protein level).

It is found in the golgi apparatus. Its subcellular location is the trans-Golgi network. The protein localises to the cell membrane. The protein resides in the late endosome. It localises to the membrane raft. It is found in the cytoplasm. Its subcellular location is the apical cell membrane. Functionally, IFN-induced antiviral host restriction factor which efficiently blocks the release of diverse mammalian enveloped viruses by directly tethering nascent virions to the membranes of infected cells. Acts as a direct physical tether, holding virions to the cell membrane and linking virions to each other. The tethered virions can be internalized by endocytosis and subsequently degraded or they can remain on the cell surface. In either case, their spread as cell-free virions is restricted. Its target viruses belong to diverse families, including retroviridae: human immunodeficiency virus type 1 (HIV-1), mouse mammary tumor virus (MMTV) and murine leukemia virus (MLV), filoviridae: ebola virus (EBOV), arenaviridae: lassa virus (LASV), and rhabdoviridae: vesicular stomatitis virus (VSV). Can inhibit cell surface proteolytic activity of MMP14 causing decreased activation of MMP15 which results in inhibition of cell growth and migration. Can stimulate signaling by LILRA4/ILT7 and consequently provide negative feedback to the production of IFN by plasmacytoid dendritic cells in response to viral infection. Plays a role in the organization of the subapical actin cytoskeleton in polarized epithelial cells. The sequence is that of Bone marrow stromal antigen 2 (Bst2) from Rattus norvegicus (Rat).